Reading from the N-terminus, the 308-residue chain is GTP-binding protein gtr1 (308 aa).

Residues S11, G14, K15, S16, S17, T31, T37, G60, H122, D125, and I159 each coordinate GTP.

The protein belongs to the GTR/RAG GTP-binding protein family. In terms of assembly, component of the GSE complex.

It is found in the vacuole membrane. The protein localises to the cytoplasm. The protein resides in the nucleus. It catalyses the reaction GTP + H2O = GDP + phosphate + H(+). Functionally, GTPase involved in activation of the TORC1 signaling pathway, which promotes growth and represses autophagy in nutrient-rich conditions. Also required for TORC1 inactivation during nitrogen starvation. This Schizosaccharomyces pombe (strain 972 / ATCC 24843) (Fission yeast) protein is GTP-binding protein gtr1 (gtr1).